The sequence spans 156 residues: MEMYEISDTLWCGLVSLRCNAITSKMNQLDTNRLENSDRACDTNREYNMINARGAHRSQLAEMSLSAAPIPSSEGLKNEGKCGYTTCFSLELISTTSRFSVCSTVSSSVPLLPEFCIVPPMLSATPPEAAKGASGSMKSGSIVVSSLPYDILPALL.

This is an uncharacterized protein from Saccharomyces cerevisiae (strain ATCC 204508 / S288c) (Baker's yeast).